An 87-amino-acid chain; its full sequence is uncharacterized protein (87 aa).

Residues 29 to 49 traverse the membrane as a helical segment; sequence ILWMIIFVVIIAVIIYILISP.

The protein localises to the membrane. This is an uncharacterized protein from Methanocaldococcus jannaschii (strain ATCC 43067 / DSM 2661 / JAL-1 / JCM 10045 / NBRC 100440) (Methanococcus jannaschii).